The chain runs to 478 residues: Stromelysin-1 (478 aa).

An N-terminal signal peptide occupies residues 1 to 17 (MKTLPTLLLLCVALCSA). The propeptide at 18 to 100 (YPLDGASRDA…PRCGVPDVGH (83 aa)) is activation peptide. A Cysteine switch motif is present at residues 91-98 (PRCGVPDV). Cys-93 provides a ligand contact to Zn(2+). Positions 125 and 159 each coordinate Ca(2+). 2 residues coordinate Zn(2+): His-169 and Asp-171. Ca(2+) is bound by residues Asp-176, Gly-177, Gly-179, and Val-181. His-184 is a binding site for Zn(2+). 3 residues coordinate Ca(2+): Gly-191, Asn-193, and Asp-195. His-197 lines the Zn(2+) pocket. Ca(2+)-binding residues include Asp-199, Asp-200, and Glu-202. Position 219 (His-219) interacts with Zn(2+). Residue Glu-220 is part of the active site. The Zn(2+) site is built by His-223 and His-229. 4 Hemopexin repeats span residues 288–337 (PVMC…WPSL), 338–384 (PSAV…GFPS), 386–434 (IRKI…FPGI), and 435–478 (NPKI…WFQC). Cys-291 and Cys-478 are disulfide-bonded. Position 298 (Asp-298) interacts with Ca(2+). Ca(2+) is bound by residues Asp-390 and Asp-439.

This sequence belongs to the peptidase M10A family. Ca(2+) is required as a cofactor. Requires Zn(2+) as cofactor.

It is found in the secreted. It localises to the extracellular space. The protein resides in the extracellular matrix. The catalysed reaction is Preferential cleavage where P1', P2' and P3' are hydrophobic residues.. Its function is as follows. Metalloproteinase with a rather broad substrate specificity that can degrade fibronectin, laminin, gelatins of type I, III, IV, and V; collagens III, IV, X, and IX, and cartilage proteoglycans. Activates different molecules including growth factors, plasminogen or other matrix metalloproteinases such as MMP9. Once released into the extracellular matrix (ECM), the inactive pro-enzyme is activated by the plasmin cascade signaling pathway. Also acts intracellularly. For example, in dopaminergic neurons, gets activated by the serine protease HTRA2 upon stress and plays a pivotal role in DA neuronal degeneration by mediating microglial activation and alpha-synuclein/SNCA cleavage. In addition, plays a role in immune response and possesses antiviral activity against various viruses. Mechanistically, translocates from the cytoplasm into the cell nucleus upon virus infection to influence NF-kappa-B activities. This is Stromelysin-1 (MMP3) from Oryctolagus cuniculus (Rabbit).